Here is a 105-residue protein sequence, read N- to C-terminus: Cell division topological specificity factor (105 aa).

The protein belongs to the MinE family.

In terms of biological role, prevents the cell division inhibition by proteins MinC and MinD at internal division sites while permitting inhibition at polar sites. This ensures cell division at the proper site by restricting the formation of a division septum at the midpoint of the long axis of the cell. This chain is Cell division topological specificity factor, found in Prochlorococcus marinus (strain MIT 9515).